Reading from the N-terminus, the 136-residue chain is Phospholipase A2 (136 aa).

Ca(2+) is bound by residues tryptophan 8, glycine 10, and glycine 12. 5 cysteine pairs are disulfide-bonded: cysteine 9–cysteine 31, cysteine 30–cysteine 70, cysteine 37–cysteine 63, cysteine 61–cysteine 95, and cysteine 105–cysteine 117. Asparagine 16 carries an N-linked (GlcNAc...) asparagine glycan. Histidine 34 is an active-site residue. Aspartate 35 is a Ca(2+) binding site. Aspartate 64 is an active-site residue.

This sequence belongs to the phospholipase A2 family. Ca(2+) serves as cofactor. In terms of tissue distribution, expressed by the venom gland.

Its subcellular location is the secreted. It catalyses the reaction a 1,2-diacyl-sn-glycero-3-phosphocholine + H2O = a 1-acyl-sn-glycero-3-phosphocholine + a fatty acid + H(+). PLA2 catalyzes the calcium-dependent hydrolysis of the 2-acyl groups in 3-sn-phosphoglycerides. The protein is Phospholipase A2 of Bombus terrestris (Buff-tailed bumblebee).